The primary structure comprises 411 residues: S-inosyl-L-homocysteine hydrolase (411 aa).

Residues Asp-121 and Glu-146 each coordinate substrate. 147 to 149 (TTT) contributes to the NAD(+) binding site. Residues Lys-176 and Asp-180 each coordinate substrate. Residues Asn-181, 210–215 (GYGWCG), Glu-233, Asn-268, 289–291 (SGH), and Asn-335 each bind NAD(+).

It belongs to the adenosylhomocysteinase family. It depends on NAD(+) as a cofactor.

The protein resides in the cytoplasm. The enzyme catalyses S-inosyl-L-homocysteine + H2O = L-homocysteine + inosine. Its pathway is amino-acid biosynthesis; S-adenosyl-L-methionine biosynthesis. In terms of biological role, catalyzes the hydrolysis of S-inosyl-L-homocysteine (SIH) to L-homocysteine (Hcy) and inosine. Likely functions in a S-adenosyl-L-methionine (SAM) recycling pathway from S-adenosyl-L-homocysteine (SAH) produced from SAM-dependent methylation reactions. Can also catalyze the reverse reaction in vitro, i.e. the synthesis of SIH from Hcy and inosine. This Methanosarcina mazei (strain ATCC BAA-159 / DSM 3647 / Goe1 / Go1 / JCM 11833 / OCM 88) (Methanosarcina frisia) protein is S-inosyl-L-homocysteine hydrolase.